The sequence spans 235 residues: Phosphoribosylaminoimidazole-succinocarboxamide synthase (235 aa).

It belongs to the SAICAR synthetase family.

It catalyses the reaction 5-amino-1-(5-phospho-D-ribosyl)imidazole-4-carboxylate + L-aspartate + ATP = (2S)-2-[5-amino-1-(5-phospho-beta-D-ribosyl)imidazole-4-carboxamido]succinate + ADP + phosphate + 2 H(+). Its pathway is purine metabolism; IMP biosynthesis via de novo pathway; 5-amino-1-(5-phospho-D-ribosyl)imidazole-4-carboxamide from 5-amino-1-(5-phospho-D-ribosyl)imidazole-4-carboxylate: step 1/2. This is Phosphoribosylaminoimidazole-succinocarboxamide synthase (purC) from Streptococcus pneumoniae serotype 4 (strain ATCC BAA-334 / TIGR4).